The following is a 123-amino-acid chain: Protein crumbs homolog 3 (123 aa).

The signal sequence occupies residues 1–26; that stretch reads MASPGLGLLLALGLPLLPARWGRAWG. Topologically, residues 27-59 are extracellular; sequence QTLDPHVNENGTITPSAPGSGSNGALSQEAITA. Residue Asn-36 is glycosylated (N-linked (GlcNAc...) asparagine). Residues 60-80 form a helical membrane-spanning segment; sequence IIVVFSLLAAVLLAVGLVLLL. The Cytoplasmic segment spans residues 81–120; the sequence is RKLREKRQTQGTYRPSSEEQFNHAAEARAPQDSKETVRGC. The disordered stretch occupies residues 87–123; that stretch reads RQTQGTYRPSSEEQFNHAAEARAPQDSKETVRGCLPI. Basic and acidic residues predominate over residues 96-117; sequence SSEEQFNHAAEARAPQDSKETV. Residues 119–123 carry the PDZ-binding motif; sequence GCLPI.

As to quaternary structure, component of a complex composed of CRB3, PALS1 and PATJ. Interacts (via C-terminus) with PALS1 (via PDZ domain). Interacts with PARD6A. Interacts (via intracellular domain) with EPB41L5. Interacts with WDR83.

It localises to the apical cell membrane. The protein localises to the cell junction. Its subcellular location is the tight junction. Functionally, involved in the establishment of cell polarity in mammalian epithelial cells. Regulates the morphogenesis of tight junctions. Involved in promoting phosphorylation and cytoplasmic retention of transcriptional coactivators YAP1 and WWTR1/TAZ which leads to suppression of TGFB1-dependent transcription of target genes such as CCN2/CTGF, SERPINE1/PAI1, SNAI1/SNAIL1 and SMAD7. In Canis lupus familiaris (Dog), this protein is Protein crumbs homolog 3.